A 299-amino-acid chain; its full sequence is CMRF35-like molecule 8 (299 aa).

Positions 1-17 (MWLPWALLLLWVPGCFA) are cleaved as a signal peptide. Residues 18–180 (LSKCRTVAGP…TEEVVNSQLP (163 aa)) lie on the Extracellular side of the membrane. The Ig-like V-type domain occupies 19–123 (SKCRTVAGPV…HDPVVEVEVS (105 aa)). Cys-36 and Cys-103 form a disulfide bridge. 2 N-linked (GlcNAc...) asparagine glycosylation sites follow: Asn-83 and Asn-92. The helical transmembrane segment at 181-201 (LLLSLLALLLLLLVGASLLAW) threads the bilayer. Residues 202–299 (RMFQKWIKAG…DSDYSVIRKT (98 aa)) lie on the Cytoplasmic side of the membrane. Residues 278 to 299 (RIAAQRPREEEPDSDYSVIRKT) form a disordered region. Tyr-293 is subject to Phosphotyrosine.

The protein belongs to the CD300 family. Upon tyrosine-phosphorylation, interacts with PTN6/SHP-1 and PTPN11/SHP-2 and INPP5D. Phosphorylated on tyrosine. Post-translationally, N-glycosylated. Expressed not only by natural killer (NK) cells but also by T-cell subsets, B-cells, dendritic cells, mast cells, granulocytes and monocytes.

Its subcellular location is the cell membrane. Functionally, inhibitory receptor which may contribute to the down-regulation of cytolytic activity in natural killer (NK) cells, and to the down-regulation of mast cell degranulation. Negatively regulates the Toll-like receptor (TLR) signaling mediated by MYD88 but not TRIF through activation of PTPN6. This Homo sapiens (Human) protein is CMRF35-like molecule 8 (CD300A).